The following is a 396-amino-acid chain: Gap junction gamma-1 protein (396 aa).

Residues 1-22 lie on the Cytoplasmic side of the membrane; sequence MSWSFLTRLLEEIHNHSTFVGK. Residues 23–45 traverse the membrane as a helical segment; it reads IWLTVLIVFRIVLTAVGGESIYY. The Extracellular segment spans residues 46-75; the sequence is DEQSKFVCNTEQPGCENVCYDAFAPLSHVR. Residues 76–95 traverse the membrane as a helical segment; sequence FWVFQIILVATPSVMYLGYA. Residues 96–175 lie on the Cytoplasmic side of the membrane; that stretch reads IHKIAKMEHG…RRIREDGLMK (80 aa). Residues 145–165 form a disordered region; it reads ELESEKENKEQNQSKPKHDGR. Residues 147-156 are compositionally biased toward basic and acidic residues; sequence ESEKENKEQN. The helical transmembrane segment at 176–198 threads the bilayer; that stretch reads IYVLQLLARTMFEVGFLIGQYFL. Over 199–228 the chain is Extracellular; that stretch reads YGFQVHPFYVCSRVPCPHKIDCFISRPTEK. The chain crosses the membrane as a helical span at residues 229–248; sequence TIFLLIMYGVTGLCLLLNIW. The Cytoplasmic segment spans residues 249–396; the sequence is EMLHLGFGTI…SGDGKTSVWI (148 aa). Positions 357–396 are disordered; sequence NHQNNPHGPREKKAKVGSKAGSNKSSASSKSGDGKTSVWI. Residues 373–396 are compositionally biased toward low complexity; that stretch reads GSKAGSNKSSASSKSGDGKTSVWI.

This sequence belongs to the connexin family. Gamma-type subfamily. In terms of assembly, a connexon is composed of a hexamer of connexins. Interacts with CNST.

The protein localises to the cell membrane. It localises to the cell junction. The protein resides in the gap junction. One gap junction consists of a cluster of closely packed pairs of transmembrane channels, the connexons, through which materials of low MW diffuse from one cell to a neighboring cell. This is Gap junction gamma-1 protein (GJC1) from Sus scrofa (Pig).